Here is a 384-residue protein sequence, read N- to C-terminus: Deoxyguanosinetriphosphate triphosphohydrolase-like protein (384 aa).

Residues 62 to 198 (RLTHSLEVST…AALADDISYI (137 aa)) enclose the HD domain.

It belongs to the dGTPase family. Type 2 subfamily.

This is Deoxyguanosinetriphosphate triphosphohydrolase-like protein from Rickettsia rickettsii (strain Iowa).